A 325-amino-acid chain; its full sequence is MAPRLEFEKPVIELQTKIAELKKFTQDSDMDLSAEIERLEDRLAKLQDDIYKNLKPWDRVQIARLADRPTTLDYIEHLFTDFFECHGDRAYGDDEAIVGGIAKFHGLPVTVIGHQRGKDTKENLVRNFGMPHPEGYRKALRLMKQADKFNRPIICFIDTKGAYPGRAAEERGQSEAIAKNLFEMAGLRVPVICIVIGEGGSGGALGLGVGNHLHMLENSTYSVISPEGAAALLWKDSSLAKKAAETMKITAPDLKELGIIDHMIKEVKGGAHHDVKLQASYMDETLKQSLKTLLKLSEEELVQQRYEKYKAIGKVSVEDQYIGVN.

The CoA carboxyltransferase C-terminal domain occupies 38–292; the sequence is RLEDRLAKLQ…DETLKQSLKT (255 aa).

Belongs to the AccA family. Acetyl-CoA carboxylase is a heterohexamer composed of biotin carboxyl carrier protein (AccB), biotin carboxylase (AccC) and two subunits each of ACCase subunit alpha (AccA) and ACCase subunit beta (AccD).

The protein resides in the cytoplasm. It carries out the reaction N(6)-carboxybiotinyl-L-lysyl-[protein] + acetyl-CoA = N(6)-biotinyl-L-lysyl-[protein] + malonyl-CoA. It participates in lipid metabolism; malonyl-CoA biosynthesis; malonyl-CoA from acetyl-CoA: step 1/1. With respect to regulation, inhibited by pyrrolidine dione antibiotics moiramide B (CPD1) and CPD2. Component of the acetyl coenzyme A carboxylase (ACC) complex. First, biotin carboxylase catalyzes the carboxylation of biotin on its carrier protein (BCCP) and then the CO(2) group is transferred by the carboxyltransferase to acetyl-CoA to form malonyl-CoA. This chain is Acetyl-coenzyme A carboxylase carboxyl transferase subunit alpha, found in Bacillus subtilis (strain 168).